A 142-amino-acid chain; its full sequence is Large ribosomal subunit protein uL13 (142 aa).

Belongs to the universal ribosomal protein uL13 family. As to quaternary structure, part of the 50S ribosomal subunit.

Its function is as follows. This protein is one of the early assembly proteins of the 50S ribosomal subunit, although it is not seen to bind rRNA by itself. It is important during the early stages of 50S assembly. The protein is Large ribosomal subunit protein uL13 of Acidithiobacillus ferrooxidans (strain ATCC 23270 / DSM 14882 / CIP 104768 / NCIMB 8455) (Ferrobacillus ferrooxidans (strain ATCC 23270)).